A 197-amino-acid chain; its full sequence is 3-isopropylmalate dehydratase small subunit (197 aa).

Belongs to the LeuD family. LeuD type 1 subfamily. In terms of assembly, heterodimer of LeuC and LeuD.

It carries out the reaction (2R,3S)-3-isopropylmalate = (2S)-2-isopropylmalate. Its pathway is amino-acid biosynthesis; L-leucine biosynthesis; L-leucine from 3-methyl-2-oxobutanoate: step 2/4. Functionally, catalyzes the isomerization between 2-isopropylmalate and 3-isopropylmalate, via the formation of 2-isopropylmaleate. In Corynebacterium glutamicum (strain R), this protein is 3-isopropylmalate dehydratase small subunit.